The sequence spans 311 residues: Protoheme IX farnesyltransferase (311 aa).

8 helical membrane passes run 30–50 (VVQLIVFCAAIGMLLAVPGWP), 55–75 (WGVALAASIGIWLVASAAAAF), 108–128 (FAVLLCAAGMAVLWVWVNALT), 129–149 (MWLTFATFVGYAVIYTVLLKP), 153–173 (QNIVIGGASGAMPPVLGWAAM), 182–202 (WILCLIIFLWTPPHFWALALY), 233–253 (FVLFAATLLPFVYGMSGWFYL), and 287–307 (IWHLSLLFAALLLDHYLGPLL).

It belongs to the UbiA prenyltransferase family. Protoheme IX farnesyltransferase subfamily.

The protein resides in the cell inner membrane. The enzyme catalyses heme b + (2E,6E)-farnesyl diphosphate + H2O = Fe(II)-heme o + diphosphate. It participates in porphyrin-containing compound metabolism; heme O biosynthesis; heme O from protoheme: step 1/1. Functionally, converts heme B (protoheme IX) to heme O by substitution of the vinyl group on carbon 2 of heme B porphyrin ring with a hydroxyethyl farnesyl side group. This chain is Protoheme IX farnesyltransferase, found in Methylibium petroleiphilum (strain ATCC BAA-1232 / LMG 22953 / PM1).